The sequence spans 333 residues: MQQIIYIANAESENIEVWILYNNGDMKLIQTVQTDGQVQPISIIKNTKLLYAGIRPKNRVITYQIDKNGLLKKKKESIVPGTPNYISFDSSEKFLFCSSYHADCISVSPLDKNGIPKDPIQIIHNIEGCHAAKFNSKYNVLFITSLKNDCIYLYYLTHFGILKSTEQKLVFSQKNSGPRHVIFHPNQNFSYTVNELNGSVDVWKISKENKVLEVKNIQNIKLLNDLISKKYWSSDIHLTSCGNFLYVSDRYLNSISLFHVNKNDNTIIFFKQYLTEEQPRAFCIDRNNNYLIVIGQKSNKLSVYKICQKTGELKKINQYQTGNGPLWITSFLI.

Belongs to the cycloisomerase 2 family.

The enzyme catalyses 6-phospho-D-glucono-1,5-lactone + H2O = 6-phospho-D-gluconate + H(+). It participates in carbohydrate degradation; pentose phosphate pathway; D-ribulose 5-phosphate from D-glucose 6-phosphate (oxidative stage): step 2/3. Catalyzes the hydrolysis of 6-phosphogluconolactone to 6-phosphogluconate. The polypeptide is 6-phosphogluconolactonase (Buchnera aphidicola subsp. Schizaphis graminum (strain Sg)).